Reading from the N-terminus, the 196-residue chain is Holliday junction branch migration complex subunit RuvA (196 aa).

Residues 1-63 (MYDYIKGKLS…DDAHLLFGFH (63 aa)) are domain I. The domain II stretch occupies residues 64–142 (TENEKEIFLN…EASGESATSR (79 aa)). Residues 143–148 (KVSSEQ) are flexible linker. The tract at residues 148–196 (QNSNLEEAMEALLALGYKATELKKVKAFFEGTNETVEQYIKSSLKMLMK) is domain III.

Belongs to the RuvA family. In terms of assembly, homotetramer. Forms an RuvA(8)-RuvB(12)-Holliday junction (HJ) complex. HJ DNA is sandwiched between 2 RuvA tetramers; dsDNA enters through RuvA and exits via RuvB. An RuvB hexamer assembles on each DNA strand where it exits the tetramer. Each RuvB hexamer is contacted by two RuvA subunits (via domain III) on 2 adjacent RuvB subunits; this complex drives branch migration. In the full resolvosome a probable DNA-RuvA(4)-RuvB(12)-RuvC(2) complex forms which resolves the HJ.

It localises to the cytoplasm. Its function is as follows. The RuvA-RuvB-RuvC complex processes Holliday junction (HJ) DNA during genetic recombination and DNA repair, while the RuvA-RuvB complex plays an important role in the rescue of blocked DNA replication forks via replication fork reversal (RFR). RuvA specifically binds to HJ cruciform DNA, conferring on it an open structure. The RuvB hexamer acts as an ATP-dependent pump, pulling dsDNA into and through the RuvAB complex. HJ branch migration allows RuvC to scan DNA until it finds its consensus sequence, where it cleaves and resolves the cruciform DNA. This chain is Holliday junction branch migration complex subunit RuvA, found in Streptococcus agalactiae serotype Ia (strain ATCC 27591 / A909 / CDC SS700).